A 298-amino-acid chain; its full sequence is Glycine--tRNA ligase alpha subunit (298 aa).

Belongs to the class-II aminoacyl-tRNA synthetase family. In terms of assembly, tetramer of two alpha and two beta subunits.

Its subcellular location is the cytoplasm. The catalysed reaction is tRNA(Gly) + glycine + ATP = glycyl-tRNA(Gly) + AMP + diphosphate. In Helicobacter hepaticus (strain ATCC 51449 / 3B1), this protein is Glycine--tRNA ligase alpha subunit.